The chain runs to 290 residues: Small ribosomal subunit biogenesis GTPase RsgA (290 aa).

The CP-type G domain occupies 62–213 (KNSLVRPPIV…IADTPGFSSL (152 aa)). Residues 111-114 (SKMD) and 156-164 (GQTGVGKST) each bind GTP. Residues Cys-237, Cys-242, His-244, and Cys-250 each contribute to the Zn(2+) site.

Belongs to the TRAFAC class YlqF/YawG GTPase family. RsgA subfamily. As to quaternary structure, monomer. Associates with 30S ribosomal subunit, binds 16S rRNA. Requires Zn(2+) as cofactor.

The protein localises to the cytoplasm. Functionally, one of several proteins that assist in the late maturation steps of the functional core of the 30S ribosomal subunit. Helps release RbfA from mature subunits. May play a role in the assembly of ribosomal proteins into the subunit. Circularly permuted GTPase that catalyzes slow GTP hydrolysis, GTPase activity is stimulated by the 30S ribosomal subunit. The polypeptide is Small ribosomal subunit biogenesis GTPase RsgA (Streptococcus pyogenes serotype M6 (strain ATCC BAA-946 / MGAS10394)).